A 394-amino-acid chain; its full sequence is Phosphoglycerate kinase (394 aa).

Substrate is bound by residues 21–23 (DFN), Arg-36, 59–62 (HLGR), Arg-118, and Arg-151. Position 183 is a phosphoserine (Ser-183). Lys-201 contributes to the ATP binding site. Thr-299 carries the phosphothreonine modification. Residues Glu-323 and 350 to 353 (GGDS) each bind ATP.

The protein belongs to the phosphoglycerate kinase family. As to quaternary structure, monomer.

The protein localises to the cytoplasm. The enzyme catalyses (2R)-3-phosphoglycerate + ATP = (2R)-3-phospho-glyceroyl phosphate + ADP. It participates in carbohydrate degradation; glycolysis; pyruvate from D-glyceraldehyde 3-phosphate: step 2/5. This chain is Phosphoglycerate kinase, found in Shouchella clausii (strain KSM-K16) (Alkalihalobacillus clausii).